The sequence spans 374 residues: Phosphate-binding protein PstS 1 (374 aa).

Positions 1–23 (MKIRLHTLLAVLTAAPLLLAAAG) are cleaved as a signal peptide. Residue cysteine 24 is the site of N-palmitoyl cysteine attachment. Cysteine 24 carries the S-diacylglycerol cysteine lipid modification. Residues 25-48 (GSKPPSGSPETGAGAGTVATTPAS) form a disordered region. Phosphate is bound by residues 58–60 (STL), serine 88, aspartate 106, and 189–191 (SGD).

It belongs to the PstS family. In terms of assembly, the complex is composed of two ATP-binding proteins (PstB), two transmembrane proteins (PstC and PstA) and a solute-binding protein (PstS).

Its subcellular location is the cell membrane. In terms of biological role, part of the ABC transporter complex PstSACB involved in phosphate import. This Mycobacterium tuberculosis (strain CDC 1551 / Oshkosh) protein is Phosphate-binding protein PstS 1 (pstS1).